Reading from the N-terminus, the 409-residue chain is Phosphatidylserine decarboxylase proenzyme, mitochondrial (409 aa).

The N-terminal 52 residues, 1-52 (MAASVCRPYVRSLPGVMPWRSSSCHYEYTAMHHFLGSFQKLPFEPFNTGARK), are a transit peptide targeting the mitochondrion. The Mitochondrial matrix portion of the chain corresponds to 53–63 (IHTAPVRSLFL). The helical transmembrane segment at 64–82 (LRPVPILLATGGGYAGYRQ) threads the bilayer. Over 83–409 (YEKYRDQKLE…IRFGEALGSL (327 aa)) the chain is Mitochondrial intermembrane. Residues aspartate 191, histidine 267, and serine 378 each act as charge relay system; for autoendoproteolytic cleavage activity in the active site. Residue serine 378 is the Schiff-base intermediate with substrate; via pyruvic acid; for decarboxylase activity of the active site. Pyruvic acid (Ser); by autocatalysis is present on serine 378.

It belongs to the phosphatidylserine decarboxylase family. PSD-B subfamily. Eukaryotic type I sub-subfamily. In terms of assembly, heterodimer of a large membrane-associated beta subunit and a small pyruvoyl-containing alpha subunit. Pyruvate serves as cofactor. Post-translationally, is synthesized initially as an inactive proenzyme. Formation of the active enzyme involves a self-maturation process in which the active site pyruvoyl group is generated from an internal serine residue via an autocatalytic post-translational modification. Two non-identical subunits are generated from the proenzyme in this reaction, and the pyruvate is formed at the N-terminus of the alpha chain, which is derived from the carboxyl end of the proenzyme. The autoendoproteolytic cleavage occurs by a canonical serine protease mechanism, in which the side chain hydroxyl group of the serine supplies its oxygen atom to form the C-terminus of the beta chain, while the remainder of the serine residue undergoes an oxidative deamination to produce ammonia and the pyruvoyl prosthetic group on the alpha chain. During this reaction, the Ser that is part of the protease active site of the proenzyme becomes the pyruvoyl prosthetic group, which constitutes an essential element of the active site of the mature decarboxylase.

The protein resides in the mitochondrion inner membrane. It localises to the cytoplasm. Its subcellular location is the lipid droplet. The catalysed reaction is a 1,2-diacyl-sn-glycero-3-phospho-L-serine + H(+) = a 1,2-diacyl-sn-glycero-3-phosphoethanolamine + CO2. The protein operates within phospholipid metabolism; phosphatidylethanolamine biosynthesis. In terms of biological role, catalyzes the formation of phosphatidylethanolamine (PtdEtn) from phosphatidylserine (PtdSer). Plays a central role in phospholipid metabolism and in the interorganelle trafficking of phosphatidylserine. May be involved in lipid droplet biogenesis at the endoplasmic reticulum membrane. This chain is Phosphatidylserine decarboxylase proenzyme, mitochondrial, found in Cricetulus griseus (Chinese hamster).